Reading from the N-terminus, the 609-residue chain is Protein KINESIN LIGHT CHAIN-RELATED 1 (609 aa).

Positions 1-77 (MPAMPGLVSV…TAAVIDVDDP (77 aa)) are disordered. A compositionally biased stretch (low complexity) spans 38–55 (KKTPSSTPSRSKPSPNRS). TPR repeat units lie at residues 140 to 173 (AMSL…PDPT), 183 to 216 (FSGH…QIQT), 225 to 258 (GETC…HRAH), 267 to 301 (AADR…IASG), 307 to 340 (ASID…FKAS), 349 to 382 (ASVF…YNKP), 392 to 425 (AGGL…LEDK), 433 to 466 (AGLE…LRAA), 474 to 507 (GVVL…LEQE), and 516 to 549 (LGVY…REEK). Residues 582-609 (LQNLIDPNARPPKKESSAKKWPSLGFKF) form a disordered region.

This sequence belongs to the kinesin light chain family. Interacts with IQD1.

It is found in the cytoplasm. Its subcellular location is the cytoskeleton. This chain is Protein KINESIN LIGHT CHAIN-RELATED 1, found in Arabidopsis thaliana (Mouse-ear cress).